The primary structure comprises 205 residues: Holliday junction branch migration complex subunit RuvA (205 aa).

The tract at residues M1 to I64 is domain I. Residues T65 to E143 form a domain II region. The flexible linker stretch occupies residues R144–P156. The segment at T157–L205 is domain III.

Belongs to the RuvA family. As to quaternary structure, homotetramer. Forms an RuvA(8)-RuvB(12)-Holliday junction (HJ) complex. HJ DNA is sandwiched between 2 RuvA tetramers; dsDNA enters through RuvA and exits via RuvB. An RuvB hexamer assembles on each DNA strand where it exits the tetramer. Each RuvB hexamer is contacted by two RuvA subunits (via domain III) on 2 adjacent RuvB subunits; this complex drives branch migration. In the full resolvosome a probable DNA-RuvA(4)-RuvB(12)-RuvC(2) complex forms which resolves the HJ.

It localises to the cytoplasm. In terms of biological role, the RuvA-RuvB-RuvC complex processes Holliday junction (HJ) DNA during genetic recombination and DNA repair, while the RuvA-RuvB complex plays an important role in the rescue of blocked DNA replication forks via replication fork reversal (RFR). RuvA specifically binds to HJ cruciform DNA, conferring on it an open structure. The RuvB hexamer acts as an ATP-dependent pump, pulling dsDNA into and through the RuvAB complex. HJ branch migration allows RuvC to scan DNA until it finds its consensus sequence, where it cleaves and resolves the cruciform DNA. The polypeptide is Holliday junction branch migration complex subunit RuvA (Shewanella sp. (strain MR-4)).